The chain runs to 554 residues: Wee1-like protein kinase 2-B (554 aa).

Disordered stretches follow at residues 1 to 86 and 145 to 182; these read MRMA…GGEC and TLVN…DSQM. Ser-38 is modified (phosphoserine). 2 stretches are compositionally biased toward polar residues: residues 38–48 and 147–163; these read SPVSSWRTNNC and VNVN…THFQ. A Protein kinase domain is found at 213–487; sequence FLEIEKIGAG…AKNSVLRRCV (275 aa). ATP-binding positions include 219–227 and Lys-242; that span reads IGAGEFGSV. The active-site Proton acceptor is the Asp-340. Mg(2+) contacts are provided by Asn-345 and Asp-377. Positions 490-516 form a coiled coil; sequence AAELQKQLNVEKFKTAMLERELQAAKL.

It belongs to the protein kinase superfamily. Ser/Thr protein kinase family. WEE1 subfamily. As to quaternary structure, interacts with cdca3. Post-translationally, ubiquitinated and degraded at the onset of G2/M phase. Phosphorylated during M and G1 phases. Interacts with cdca3 when phosphorylated at Ser-38.

It is found in the nucleus. It catalyses the reaction L-tyrosyl-[protein] + ATP = O-phospho-L-tyrosyl-[protein] + ADP + H(+). Oocyte and early embryo-specific protein tyrosine kinase that phosphorylates and inhibits cdk1 and acts as a regulator of meiosis in oocytes. Required to ensure the meiotic cell cycle in oocytes by phosphorylating cdk1 at 'Tyr-15', leading to inhibit cdk1 activity and prevent meiosis. This chain is Wee1-like protein kinase 2-B (wee2-b), found in Xenopus laevis (African clawed frog).